The sequence spans 233 residues: NAD(P)H-hydrate epimerase (233 aa).

The YjeF N-terminal domain maps to 15-218; the sequence is SQQFDVELMS…KLQEKYNFIV (204 aa). 67-71 serves as a coordination point for (6S)-NADPHX; it reads NNGGD. The K(+) site is built by Asn-68 and Asp-128. Residues 132-138, Tyr-143, and Asp-161 contribute to the (6S)-NADPHX site; that span reads GFSFKPP. Ser-164 is a K(+) binding site.

The protein belongs to the NnrE/AIBP family. K(+) is required as a cofactor.

The enzyme catalyses (6R)-NADHX = (6S)-NADHX. It catalyses the reaction (6R)-NADPHX = (6S)-NADPHX. In terms of biological role, catalyzes the epimerization of the S- and R-forms of NAD(P)HX, a damaged form of NAD(P)H that is a result of enzymatic or heat-dependent hydration. This is a prerequisite for the S-specific NAD(P)H-hydrate dehydratase to allow the repair of both epimers of NAD(P)HX. The sequence is that of NAD(P)H-hydrate epimerase from Paramecium tetraurelia.